A 1461-amino-acid chain; its full sequence is Gag-Pro-Pol polyprotein (1461 aa).

The N-myristoyl glycine; by host moiety is linked to residue G2. The PTAP/PSAP motif signature appears at 94 to 97 (PSAP). Residues 94 to 121 (PSAPAAPVPTPICPTTTPPPPPPPSPEA) are disordered. The segment covering 97 to 121 (PAAPVPTPICPTTTPPPPPPPSPEA) has biased composition (pro residues). The PPXY motif motif lies at 124-127 (PPPY). The short motif at 130–133 (PTTT) is the PTAP/PSAP motif element. 2 CCHC-type zinc fingers span residues 361 to 378 (QPCF…DCTQ) and 384 to 401 (GPCP…DCPQ). Positions 399–425 (CPQLKPPQEEGEPLLLDLPSTSGTTEE) are disordered. The Peptidase A2 domain maps to 473-551 (TQALLDTGAD…NKWTIIGRDA (79 aa)). D478 serves as the catalytic For protease activity; shared with dimeric partner. Residues 612–802 (LEAGHIEPYS…GQIRFLGQVI (191 aa)) form the Reverse transcriptase domain. Mg(2+) contacts are provided by D678, D753, D754, D1038, E1073, D1095, D1156, D1229, and D1286. The region spanning 1029-1164 (LDTAPCLFSD…TDSLILAPLV (136 aa)) is the RNase H type-1 domain. The Integrase catalytic domain maps to 1218 to 1387 (RGLLPNHIWQ…PPIPEASTPP (170 aa)). The integrase-type DNA-binding region spans 1392–1441 (KWFYYKLPGLTNQRWKGPLQSLQEAAGAALLSIDGSPRWIPWRFLKKAAC).

As to quaternary structure, homodimer; the homodimers are part of the immature particles. Interacts with human TSG101 and NEDD4; these interactions are essential for budding and release of viral particles. Homodimer; further assembles as homohexamers. The cofactor is Mg(2+). Phosphorylation of the matrix protein p19 by MAPK1 seems to play a role in budding. Post-translationally, myristoylated. Myristoylation of the matrix (MA) domain mediates the transport and binding of Gag polyproteins to the host plasma membrane and is required for the assembly of viral particles. In terms of processing, specific enzymatic cleavages by the viral protease yield mature proteins. The polyprotein is cleaved during and after budding, this process is termed maturation. The protease is autoproteolytically processed at its N- and C-termini.

It is found in the virion. It catalyses the reaction Endonucleolytic cleavage to 5'-phosphomonoester.. The catalysed reaction is DNA(n) + a 2'-deoxyribonucleoside 5'-triphosphate = DNA(n+1) + diphosphate. Its function is as follows. The matrix domain targets Gag, Gag-Pro and Gag-Pro-Pol polyproteins to the plasma membrane via a multipartite membrane binding signal, that includes its myristoylated N-terminus. In terms of biological role, matrix protein. Functionally, forms the spherical core of the virus that encapsulates the genomic RNA-nucleocapsid complex. Binds strongly to viral nucleic acids and promote their aggregation. Also destabilizes the nucleic acids duplexes via highly structured zinc-binding motifs. Its function is as follows. The aspartyl protease mediates proteolytic cleavages of Gag and Gag-Pol polyproteins during or shortly after the release of the virion from the plasma membrane. Cleavages take place as an ordered, step-wise cascade to yield mature proteins. This process is called maturation. Displays maximal activity during the budding process just prior to particle release from the cell (Potential). Cleaves the translation initiation factor eIF4G leading to the inhibition of host cap-dependent translation. In terms of biological role, RT is a multifunctional enzyme that converts the viral RNA genome into dsDNA in the cytoplasm, shortly after virus entry into the cell. This enzyme displays a DNA polymerase activity that can copy either DNA or RNA templates, and a ribonuclease H (RNase H) activity that cleaves the RNA strand of RNA-DNA heteroduplexes in a partially processive 3' to 5'-endonucleasic mode. Conversion of viral genomic RNA into dsDNA requires many steps. A tRNA-Pro binds to the primer-binding site (PBS) situated at the 5'-end of the viral RNA. RT uses the 3' end of the tRNA primer to perform a short round of RNA-dependent minus-strand DNA synthesis. The reading proceeds through the U5 region and ends after the repeated (R) region which is present at both ends of viral RNA. The portion of the RNA-DNA heteroduplex is digested by the RNase H, resulting in a ssDNA product attached to the tRNA primer. This ssDNA/tRNA hybridizes with the identical R region situated at the 3' end of viral RNA. This template exchange, known as minus-strand DNA strong stop transfer, can be either intra- or intermolecular. RT uses the 3' end of this newly synthesized short ssDNA to perform the RNA-dependent minus-strand DNA synthesis of the whole template. RNase H digests the RNA template except for a polypurine tract (PPT) situated at the 5' end of the genome. It is not clear if both polymerase and RNase H activities are simultaneous. RNase H probably can proceed both in a polymerase-dependent (RNA cut into small fragments by the same RT performing DNA synthesis) and a polymerase-independent mode (cleavage of remaining RNA fragments by free RTs). Secondly, RT performs DNA-directed plus-strand DNA synthesis using the PPT that has not been removed by RNase H as primer. PPT and tRNA primers are then removed by RNase H. The 3' and 5' ssDNA PBS regions hybridize to form a circular dsDNA intermediate. Strand displacement synthesis by RT to the PBS and PPT ends produces a blunt ended, linear dsDNA copy of the viral genome that includes long terminal repeats (LTRs) at both ends. Functionally, catalyzes viral DNA integration into the host chromosome, by performing a series of DNA cutting and joining reactions. The chain is Gag-Pro-Pol polyprotein (gag-pro-pol) from Human T-cell leukemia virus 2 (HTLV-2).